The sequence spans 374 residues: DNA replication and repair protein RecF (374 aa).

30-37 (GHNAQGKT) is a binding site for ATP.

It belongs to the RecF family.

Its subcellular location is the cytoplasm. The RecF protein is involved in DNA metabolism; it is required for DNA replication and normal SOS inducibility. RecF binds preferentially to single-stranded, linear DNA. It also seems to bind ATP. The protein is DNA replication and repair protein RecF of Limosilactobacillus reuteri (strain DSM 20016) (Lactobacillus reuteri).